Consider the following 319-residue polypeptide: ATP-dependent 6-phosphofructokinase (319 aa).

Gly-11 contributes to the ATP binding site. 21–25 is an ADP binding site; that stretch reads RAVVR. ATP-binding positions include 72-73 and 102-105; these read RS and GDGS. Position 103 (Asp-103) interacts with Mg(2+). A substrate-binding site is contributed by 125-127; that stretch reads TID. The active-site Proton acceptor is the Asp-127. An ADP-binding site is contributed by Arg-154. Substrate contacts are provided by residues Arg-162 and 169 to 171; that span reads MGR. Residues 185-187 and 213-215 contribute to the ADP site; these read GAE and KMH. Substrate contacts are provided by residues Glu-222, Arg-243, and 249-252; that span reads HIQR.

Belongs to the phosphofructokinase type A (PFKA) family. ATP-dependent PFK group I subfamily. Prokaryotic clade 'B1' sub-subfamily. As to quaternary structure, homotetramer. It depends on Mg(2+) as a cofactor.

Its subcellular location is the cytoplasm. The enzyme catalyses beta-D-fructose 6-phosphate + ATP = beta-D-fructose 1,6-bisphosphate + ADP + H(+). The protein operates within carbohydrate degradation; glycolysis; D-glyceraldehyde 3-phosphate and glycerone phosphate from D-glucose: step 3/4. Its activity is regulated as follows. Allosterically activated by ADP and other diphosphonucleosides, and allosterically inhibited by phosphoenolpyruvate. Functionally, catalyzes the phosphorylation of D-fructose 6-phosphate to fructose 1,6-bisphosphate by ATP, the first committing step of glycolysis. This is ATP-dependent 6-phosphofructokinase from Clostridium tetani (strain Massachusetts / E88).